Consider the following 871-residue polypeptide: Tegument protein UL47 homolog (871 aa).

The disordered stretch occupies residues 1–212 (MDQHHGARGG…DEDDMEVIRD (212 aa)). The Nuclear localization signal signature appears at 13–33 (IRRPRRSIESRSHPFRATGNT). Polar residues-rich tracts occupy residues 30–41 (TGNTQRTYSTPR) and 59–81 (EQAS…STSF). Acidic residues-rich tracts occupy residues 114-134 (SSSE…EEDQ), 146-155 (SSDENDEEED), and 185-207 (SESE…EDDM).

It belongs to the alphaherpesvirinae HHV-1 UL47 family. As to quaternary structure, interacts with US3 kinase. Interacts with UL31 and UL34; these interactions seem important for efficient virion nuclear egress. Interacts with UL41/VHS. Phosphorylated by US3. This phosphorylation is required for proper nuclear localization.

The protein resides in the virion tegument. The protein localises to the host nucleus. Its subcellular location is the host cytoplasm. Its function is as follows. Tegument protein that can bind to various RNA transcripts. Plays a role in the attenuation of selective viral and cellular mRNA degradation by modulating the activity of host shutoff RNase UL41/VHS. Also plays a role in the primary envelopment of virions in the perinuclear space, probably by interacting with two nuclear egress proteins UL31 and UL34. This Equine herpesvirus 1 (strain V592) (EHV-1) protein is Tegument protein UL47 homolog.